Consider the following 331-residue polypeptide: 4-hydroxy-3-methylbut-2-enyl diphosphate reductase (331 aa).

A [4Fe-4S] cluster-binding site is contributed by Cys-12. Residues His-43 and His-81 each contribute to the (2E)-4-hydroxy-3-methylbut-2-enyl diphosphate site. Residues His-43 and His-81 each coordinate dimethylallyl diphosphate. Isopentenyl diphosphate contacts are provided by His-43 and His-81. Cys-103 provides a ligand contact to [4Fe-4S] cluster. Residue His-131 participates in (2E)-4-hydroxy-3-methylbut-2-enyl diphosphate binding. Residue His-131 coordinates dimethylallyl diphosphate. Isopentenyl diphosphate is bound at residue His-131. The Proton donor role is filled by Glu-133. A (2E)-4-hydroxy-3-methylbut-2-enyl diphosphate-binding site is contributed by Thr-170. [4Fe-4S] cluster is bound at residue Cys-198. Residues Ser-226, Asn-228, and Ser-271 each contribute to the (2E)-4-hydroxy-3-methylbut-2-enyl diphosphate site. 3 residues coordinate dimethylallyl diphosphate: Ser-226, Asn-228, and Ser-271. The isopentenyl diphosphate site is built by Ser-226, Asn-228, and Ser-271.

The protein belongs to the IspH family. Requires [4Fe-4S] cluster as cofactor.

It catalyses the reaction isopentenyl diphosphate + 2 oxidized [2Fe-2S]-[ferredoxin] + H2O = (2E)-4-hydroxy-3-methylbut-2-enyl diphosphate + 2 reduced [2Fe-2S]-[ferredoxin] + 2 H(+). The enzyme catalyses dimethylallyl diphosphate + 2 oxidized [2Fe-2S]-[ferredoxin] + H2O = (2E)-4-hydroxy-3-methylbut-2-enyl diphosphate + 2 reduced [2Fe-2S]-[ferredoxin] + 2 H(+). The protein operates within isoprenoid biosynthesis; dimethylallyl diphosphate biosynthesis; dimethylallyl diphosphate from (2E)-4-hydroxy-3-methylbutenyl diphosphate: step 1/1. It participates in isoprenoid biosynthesis; isopentenyl diphosphate biosynthesis via DXP pathway; isopentenyl diphosphate from 1-deoxy-D-xylulose 5-phosphate: step 6/6. Catalyzes the conversion of 1-hydroxy-2-methyl-2-(E)-butenyl 4-diphosphate (HMBPP) into a mixture of isopentenyl diphosphate (IPP) and dimethylallyl diphosphate (DMAPP). Acts in the terminal step of the DOXP/MEP pathway for isoprenoid precursor biosynthesis. The sequence is that of 4-hydroxy-3-methylbut-2-enyl diphosphate reductase from Listeria monocytogenes serovar 1/2a (strain ATCC BAA-679 / EGD-e).